The primary structure comprises 296 residues: Solute carrier protein FPSE_08119 (296 aa).

The next 3 helical transmembrane spans lie at 12–32 (GLAA…GMVA), 122–142 (AGVG…VILI), and 219–239 (AVAA…FDFV). 3 Solcar repeats span residues 16–102 (LQTA…FEKE), 114–205 (LSFG…AKNQ), and 213–296 (SPPV…GPHS).

It belongs to the mitochondrial carrier (TC 2.A.29) family.

It localises to the mitochondrion inner membrane. Its function is as follows. Solute carrier protein; part of the Fusarium detoxification of benzoxazolinone cluster involved in the degradation of benzoxazolinones produced by the host plant. Maize, wheat, and rye produce the 2 benzoxazinone phytoanticipins 2,4-dihy-droxy-7-methoxy-1,4-benzoxazin-3-one (DIMBOA) and 2,4-dihydroxy-1,4-benzoxazin-3-one (DIBOA) that, due to their inherent instability once released, spontaneously degrade to the more stable corresponding benzoxazolinones, 6-methoxy-2-benzoxazolinone (MBOA) and 2-benzoxazolinone (BOA), respectively. The sequence is that of Solute carrier protein FPSE_08119 from Fusarium pseudograminearum (strain CS3096) (Wheat and barley crown-rot fungus).